Reading from the N-terminus, the 388-residue chain is Glutamine transporter 2 (388 aa).

11 consecutive transmembrane segments (helical) span residues 5–27, 31–53, 86–106, 121–141, 147–167, 186–206, 218–238, 268–288, 302–322, 326–346, and 368–388; these read LFGSALILSGTALGAGMLAIPMV, FGLFYSTLLMLIICAGTTYAALL, LFYLLLFCMLIAYILGAADLI, FAQVAFTLFASAFVVCGTQII, LLFFFMISMLVLTLIILIPGM, TSTILFTSFASMPVIPSLVAY, MVILGSIIPLICYLVWLYAVV, IILSIFTSLALLTSFLGVAMA, IVTYVCTFILPLLGAGLAADQ, VLGYAGVILVFLAIFIPLAMV, and GGKLALGLTLLFGLLLLISQI.

This sequence belongs to the amino acid/polyamine transporter 2 family.

The protein localises to the cell inner membrane. In terms of biological role, seems to be involved in glutamine transport. Complements an E.coli glnP deletion mutant. This is Glutamine transporter 2 from Aliivibrio fischeri (strain ATCC 700601 / ES114) (Vibrio fischeri).